Reading from the N-terminus, the 235-residue chain is Cytochrome c oxidase subunit 2 (235 aa).

Over 1 to 14 (MPYPMQLGFQDATS) the chain is Mitochondrial intermembrane. A helical membrane pass occupies residues 15-45 (PIMEELMYFHDHTLMIVFLISSLVLYIIILM). Residues 46-59 (LTTKLTHTSTMDAQ) are Mitochondrial matrix-facing. Residues 60–87 (EVETIWTILPAVILILIALPSLRILYMM) form a helical membrane-spanning segment. Over 88-235 (DEIYNPYLTV…MQSFLSYLYI (148 aa)) the chain is Mitochondrial intermembrane. 6 residues coordinate Cu cation: His-161, Cys-196, Glu-198, Cys-200, His-204, and Met-207. Glu-198 lines the Mg(2+) pocket. Phosphotyrosine is present on Tyr-218.

The protein belongs to the cytochrome c oxidase subunit 2 family. As to quaternary structure, component of the cytochrome c oxidase (complex IV, CIV), a multisubunit enzyme composed of 14 subunits. The complex is composed of a catalytic core of 3 subunits MT-CO1, MT-CO2 and MT-CO3, encoded in the mitochondrial DNA, and 11 supernumerary subunits COX4I, COX5A, COX5B, COX6A, COX6B, COX6C, COX7A, COX7B, COX7C, COX8 and NDUFA4, which are encoded in the nuclear genome. The complex exists as a monomer or a dimer and forms supercomplexes (SCs) in the inner mitochondrial membrane with NADH-ubiquinone oxidoreductase (complex I, CI) and ubiquinol-cytochrome c oxidoreductase (cytochrome b-c1 complex, complex III, CIII), resulting in different assemblies (supercomplex SCI(1)III(2)IV(1) and megacomplex MCI(2)III(2)IV(2)). Found in a complex with TMEM177, COA6, COX18, COX20, SCO1 and SCO2. Interacts with TMEM177 in a COX20-dependent manner. Interacts with COX20. Interacts with COX16. Cu cation is required as a cofactor.

It localises to the mitochondrion inner membrane. It catalyses the reaction 4 Fe(II)-[cytochrome c] + O2 + 8 H(+)(in) = 4 Fe(III)-[cytochrome c] + 2 H2O + 4 H(+)(out). Its function is as follows. Component of the cytochrome c oxidase, the last enzyme in the mitochondrial electron transport chain which drives oxidative phosphorylation. The respiratory chain contains 3 multisubunit complexes succinate dehydrogenase (complex II, CII), ubiquinol-cytochrome c oxidoreductase (cytochrome b-c1 complex, complex III, CIII) and cytochrome c oxidase (complex IV, CIV), that cooperate to transfer electrons derived from NADH and succinate to molecular oxygen, creating an electrochemical gradient over the inner membrane that drives transmembrane transport and the ATP synthase. Cytochrome c oxidase is the component of the respiratory chain that catalyzes the reduction of oxygen to water. Electrons originating from reduced cytochrome c in the intermembrane space (IMS) are transferred via the dinuclear copper A center (CU(A)) of subunit 2 and heme A of subunit 1 to the active site in subunit 1, a binuclear center (BNC) formed by heme A3 and copper B (CU(B)). The BNC reduces molecular oxygen to 2 water molecules using 4 electrons from cytochrome c in the IMS and 4 protons from the mitochondrial matrix. In Didelphis virginiana (North American opossum), this protein is Cytochrome c oxidase subunit 2 (MT-CO2).